The following is a 760-amino-acid chain: BMP/retinoic acid-inducible neural-specific protein 1 (760 aa).

Residues 1-16 form the signal peptide; the sequence is MNWRFVELLYFLFVWG. The MACPF domain occupies 68 to 251; sequence RYKIYREFAR…FVQSALSYIM (184 aa). N-linked (GlcNAc...) asparagine glycosylation is found at asparagine 156, asparagine 433, asparagine 443, asparagine 553, asparagine 599, asparagine 630, and asparagine 676.

The protein belongs to the BRINP family. Expressed in brain. Expressed in GABAergic neurons of the pre-frontal cortex. Weakly expressed in embryonic stem (ES) cells and in ES-derived neural stem cells (NSCs).

It localises to the cytoplasm. In terms of biological role, plays a role in neurogenesis, brain development, and the functioning of GABAergic neurons. May suppress cell cycle progression in postmitotic neurons by inhibiting G1/S transition. In Mus musculus (Mouse), this protein is BMP/retinoic acid-inducible neural-specific protein 1 (Brinp1).